The sequence spans 283 residues: uncharacterized protein (283 aa).

A signal peptide spans 1 to 21; that stretch reads MKLKLKFLLISLLGSSLLLSA. C22 carries N-palmitoyl cysteine lipidation. Residue C22 is the site of S-diacylglycerol cysteine attachment.

It belongs to the MG439/MG440 family.

Its subcellular location is the cell membrane. This is an uncharacterized protein from Mycoplasma pneumoniae (strain ATCC 29342 / M129 / Subtype 1) (Mycoplasmoides pneumoniae).